Here is a 1558-residue protein sequence, read N- to C-terminus: Calmodulin-regulated spectrin-associated protein 1-B (1558 aa).

A Calponin-homology (CH) domain is found at 231–346 (WYWKLVPVRY…FIAELFWWFE (116 aa)). Polar residues-rich tracts occupy residues 400 to 417 (VQNSPEVCNSNKGSSGFS), 440 to 450 (ACRNRSNSLTQ), and 504 to 516 (ASTVTPKHQSHPG). 7 disordered regions span residues 400-464 (VQNS…SDKR), 504-523 (ASTVTPKHQSHPGQGSVRRI), 551-585 (NDITLTNSEDTERQGVTPGAKSIWGRQEDASSDSR), 602-675 (AKEK…APGQ), 737-790 (TKEL…VASG), 803-850 (QRFG…QNKD), and 943-968 (DRSKEAEEPEKASCEWAGGGTVSSSP). A compositionally biased stretch (basic and acidic residues) spans 602–620 (AKEKSISLNKEEESGEGRQ). Residues 643–658 (QTLNRTFTPNTSSEFE) show a composition bias toward polar residues. The segment covering 737–772 (TKELHPDKKQHFEEEVESAKLREDMNVKEHEDKDGG) has biased composition (basic and acidic residues). Low complexity-rich tracts occupy residues 776–790 (SSPGQQSQVSSVASG) and 812–822 (RSSTSSSQRTT). A coiled-coil region spans residues 849-887 (KDNANMLASELVQLHMQLEEKRRAIESQKKKMEILTARQ). The span at 943–955 (DRSKEAEEPEKAS) shows a compositional bias: basic and acidic residues. Residues 971 to 1004 (VEEEVDLNECNRSIELLNEAIGSIQQQMMQLSLQ) adopt a coiled-coil conformation. 4 disordered regions span residues 1041-1131 (FVEP…TFHL), 1257-1293 (LRKQQLEAESEQKRDETRRKAEEERIRKEEEKARREL), 1305-1344 (ELCEEQEQPQPKPKTKPKKQRLKSVVKEEPSIDPLPKCPA), and 1360-1414 (LASV…ITST). Residues 1080–1090 (SSTPTPTDSPS) show a composition bias toward low complexity. Residues 1106–1115 (DFVQSSVRSE) show a composition bias toward polar residues. Residues 1243-1303 (AFLLKQQRKA…IKQEYLRKKQ (61 aa)) are a coiled coil. Residues 1317 to 1328 (PKTKPKKQRLKS) are compositionally biased toward basic residues. The CKK domain maps to 1421–1555 (GPKLFKEPSA…QAKRPAGPKK (135 aa)).

This sequence belongs to the CAMSAP1 family.

The protein resides in the cytoplasm. The protein localises to the cytoskeleton. In terms of biological role, key microtubule-organizing protein that specifically binds the minus-end of non-centrosomal microtubules and regulates their dynamics and organization. Specifically recognizes growing microtubule minus-ends and stabilizes microtubules. Acts on free microtubule minus-ends that are not capped by microtubule-nucleating proteins or other factors and protects microtubule minus-ends from depolymerization. In contrast to camsap2 and camsap3, tracks along the growing tips of minus-end microtubules without significantly affecting the polymerization rate: binds at the very tip of the microtubules minus-end and acts as a minus-end tracking protein (-TIP) that dissociates from microtubules after allowing tubulin incorporation. Through interaction with spectrin may regulate neurite outgrowth. In Danio rerio (Zebrafish), this protein is Calmodulin-regulated spectrin-associated protein 1-B (camsap1b).